We begin with the raw amino-acid sequence, 137 residues long: Small ribosomal subunit protein bS6 (137 aa).

A disordered region spans residues Ser-104–Ala-137. The segment covering Asn-111–Ala-137 has biased composition (basic and acidic residues).

Belongs to the bacterial ribosomal protein bS6 family.

In terms of biological role, binds together with bS18 to 16S ribosomal RNA. This Helicobacter hepaticus (strain ATCC 51449 / 3B1) protein is Small ribosomal subunit protein bS6.